Reading from the N-terminus, the 467-residue chain is 3-isopropylmalate dehydratase large subunit (467 aa).

Cys-347, Cys-408, and Cys-411 together coordinate [4Fe-4S] cluster.

This sequence belongs to the aconitase/IPM isomerase family. LeuC type 1 subfamily. Heterodimer of LeuC and LeuD. It depends on [4Fe-4S] cluster as a cofactor.

It catalyses the reaction (2R,3S)-3-isopropylmalate = (2S)-2-isopropylmalate. It participates in amino-acid biosynthesis; L-leucine biosynthesis; L-leucine from 3-methyl-2-oxobutanoate: step 2/4. Catalyzes the isomerization between 2-isopropylmalate and 3-isopropylmalate, via the formation of 2-isopropylmaleate. In Bordetella bronchiseptica (strain ATCC BAA-588 / NCTC 13252 / RB50) (Alcaligenes bronchisepticus), this protein is 3-isopropylmalate dehydratase large subunit.